Here is a 429-residue protein sequence, read N- to C-terminus: Metacaspase-1A (429 aa).

Residues 1-68 (MQHHHQGSYG…PQHNGGQMYG (68 aa)) form a disordered region. The span at 8-19 (SYGGGGGGGGYP) shows a compositional bias: gly residues. Positions 20–45 (GQAYREQNPYGYGQQSPQQGYGAPQQ) are enriched in low complexity. Residues 46-62 (HNGYNQPPSGYGQPQHN) are compositionally biased toward polar residues. Residues His-220 and Cys-276 contribute to the active site.

The protein belongs to the peptidase C14B family.

Involved in cell death (apoptosis). In Aspergillus clavatus (strain ATCC 1007 / CBS 513.65 / DSM 816 / NCTC 3887 / NRRL 1 / QM 1276 / 107), this protein is Metacaspase-1A (casA).